The sequence spans 102 residues: UPF0045 protein Mb1933 (102 aa).

Belongs to the UPF0045 family.

The protein is UPF0045 protein Mb1933 of Mycobacterium bovis (strain ATCC BAA-935 / AF2122/97).